Reading from the N-terminus, the 183-residue chain is Large ribosomal subunit protein eL18 (183 aa).

The disordered stretch occupies residues 150–183 (RHFGPAPGAPRSHTKPYVRTKGHEKARPSRRANV).

The protein belongs to the eukaryotic ribosomal protein eL18 family.

It is found in the cytoplasm. This is Large ribosomal subunit protein eL18 (RpL18) from Bombyx mori (Silk moth).